Reading from the N-terminus, the 66-residue chain is Large ribosomal subunit protein uL29 (66 aa).

The protein belongs to the universal ribosomal protein uL29 family.

The protein is Large ribosomal subunit protein uL29 of Francisella philomiragia subsp. philomiragia (strain ATCC 25017 / CCUG 19701 / FSC 153 / O#319-036).